The following is a 339-amino-acid chain: Proto-oncogene serine/threonine-protein kinase mos (339 aa).

A Protein kinase domain is found at 61-335 (VCLLHRLGSG…LLQKDLKAFR (275 aa)). ATP contacts are provided by residues 67–75 (LGSGGFGSV) and lysine 88. The active-site Proton acceptor is aspartate 196.

It belongs to the protein kinase superfamily. Ser/Thr protein kinase family. Interacts with MAP2K1/MEK1. Expressed mainly in gonadal tissues, and cardiac and skeletal muscles.

The protein resides in the cytoplasm. The catalysed reaction is L-seryl-[protein] + ATP = O-phospho-L-seryl-[protein] + ADP + H(+). It carries out the reaction L-threonyl-[protein] + ATP = O-phospho-L-threonyl-[protein] + ADP + H(+). Its function is as follows. Serine/threonine kinase involved in the regulation of MAPK signaling. Is an activator of the ERK1/2 signaling cascade playing an essential role in the stimulation of oocyte maturation. This chain is Proto-oncogene serine/threonine-protein kinase mos, found in Rattus norvegicus (Rat).